Reading from the N-terminus, the 89-residue chain is Small ribosomal subunit protein uS15 (89 aa).

The protein belongs to the universal ribosomal protein uS15 family. In terms of assembly, part of the 30S ribosomal subunit. Forms a bridge to the 50S subunit in the 70S ribosome, contacting the 23S rRNA.

One of the primary rRNA binding proteins, it binds directly to 16S rRNA where it helps nucleate assembly of the platform of the 30S subunit by binding and bridging several RNA helices of the 16S rRNA. In terms of biological role, forms an intersubunit bridge (bridge B4) with the 23S rRNA of the 50S subunit in the ribosome. This is Small ribosomal subunit protein uS15 from Alcanivorax borkumensis (strain ATCC 700651 / DSM 11573 / NCIMB 13689 / SK2).